Reading from the N-terminus, the 504-residue chain is Protein psiD (504 aa).

An N-terminal signal peptide occupies residues 1–21 (MKYSYLLLILLLSNLYKEGFS). Residues Asn87, Asn136, Asn236, Asn252, Asn290, and Asn373 are each glycosylated (N-linked (GlcNAc...) asparagine). Residues 111–251 (LTRVGDSTYA…YDACGVCDGH (141 aa)) enclose the PA14 domain. The segment covering 417–430 (TVTPTVTPTVTPTP) has biased composition (low complexity). A disordered region spans residues 417-453 (TVTPTVTPTVTPTPTTTPTPSPTTVPPRPTPTPLPAD). Positions 431-453 (TTTPTPSPTTVPPRPTPTPLPAD) are enriched in pro residues. N-linked (GlcNAc...) asparagine glycosylation occurs at Asn483.

It belongs to the prespore-cell-inducing factor family.

The protein resides in the secreted. The sequence is that of Protein psiD (psiD) from Dictyostelium discoideum (Social amoeba).